The sequence spans 148 residues: SPbeta prophage-derived uncharacterized protein YomK (148 aa).

The next 2 helical transmembrane spans lie at 72–92 (WGIG…LFGV) and 104–124 (NALI…RNII).

The protein resides in the cell membrane. The protein is SPbeta prophage-derived uncharacterized protein YomK (yomK) of Bacillus subtilis (strain 168).